The chain runs to 178 residues: Probable chorismate pyruvate-lyase (178 aa).

Residues Met37, Arg78, Leu114, and Glu165 each coordinate substrate.

This sequence belongs to the UbiC family.

The protein resides in the cytoplasm. It catalyses the reaction chorismate = 4-hydroxybenzoate + pyruvate. The protein operates within cofactor biosynthesis; ubiquinone biosynthesis. Functionally, removes the pyruvyl group from chorismate, with concomitant aromatization of the ring, to provide 4-hydroxybenzoate (4HB) for the ubiquinone pathway. This is Probable chorismate pyruvate-lyase from Aeromonas hydrophila subsp. hydrophila (strain ATCC 7966 / DSM 30187 / BCRC 13018 / CCUG 14551 / JCM 1027 / KCTC 2358 / NCIMB 9240 / NCTC 8049).